The chain runs to 362 residues: 4-hydroxythreonine-4-phosphate dehydrogenase (362 aa).

Residue threonine 149 participates in substrate binding. A divalent metal cation contacts are provided by histidine 184, histidine 229, and histidine 295. The substrate site is built by lysine 303, asparagine 312, and arginine 321.

The protein belongs to the PdxA family. Homodimer. Requires a divalent metal cation as cofactor.

It localises to the cytoplasm. It carries out the reaction 4-(phosphooxy)-L-threonine + NAD(+) = 3-amino-2-oxopropyl phosphate + CO2 + NADH. The protein operates within cofactor biosynthesis; pyridoxine 5'-phosphate biosynthesis; pyridoxine 5'-phosphate from D-erythrose 4-phosphate: step 4/5. Its function is as follows. Catalyzes the NAD(P)-dependent oxidation of 4-(phosphooxy)-L-threonine (HTP) into 2-amino-3-oxo-4-(phosphooxy)butyric acid which spontaneously decarboxylates to form 3-amino-2-oxopropyl phosphate (AHAP). In Nostoc sp. (strain PCC 7120 / SAG 25.82 / UTEX 2576), this protein is 4-hydroxythreonine-4-phosphate dehydrogenase.